The following is a 168-amino-acid chain: Endoribonuclease YbeY (168 aa).

Zn(2+) contacts are provided by H119, H123, and H129.

Belongs to the endoribonuclease YbeY family. The cofactor is Zn(2+).

Its subcellular location is the cytoplasm. In terms of biological role, single strand-specific metallo-endoribonuclease involved in late-stage 70S ribosome quality control and in maturation of the 3' terminus of the 16S rRNA. The sequence is that of Endoribonuclease YbeY from Gluconobacter oxydans (strain 621H) (Gluconobacter suboxydans).